A 392-amino-acid polypeptide reads, in one-letter code: Chaperone protein DnaJ (392 aa).

The J domain occupies aspartate 2–glycine 67. The CR-type zinc finger occupies glycine 149–lysine 227. Zn(2+) contacts are provided by cysteine 162, cysteine 165, cysteine 179, cysteine 182, cysteine 201, cysteine 204, cysteine 215, and cysteine 218. CXXCXGXG motif repeat units follow at residues cysteine 162 to glycine 169, cysteine 179 to glycine 186, cysteine 201 to glycine 208, and cysteine 215 to glycine 222.

The protein belongs to the DnaJ family. Homodimer. Zn(2+) is required as a cofactor.

The protein resides in the cytoplasm. Its function is as follows. Participates actively in the response to hyperosmotic and heat shock by preventing the aggregation of stress-denatured proteins and by disaggregating proteins, also in an autonomous, DnaK-independent fashion. Unfolded proteins bind initially to DnaJ; upon interaction with the DnaJ-bound protein, DnaK hydrolyzes its bound ATP, resulting in the formation of a stable complex. GrpE releases ADP from DnaK; ATP binding to DnaK triggers the release of the substrate protein, thus completing the reaction cycle. Several rounds of ATP-dependent interactions between DnaJ, DnaK and GrpE are required for fully efficient folding. Also involved, together with DnaK and GrpE, in the DNA replication of plasmids through activation of initiation proteins. The sequence is that of Chaperone protein DnaJ from Chlamydia trachomatis serovar L2 (strain ATCC VR-902B / DSM 19102 / 434/Bu).